The following is a 189-amino-acid chain: Ras-like protein 1 (189 aa).

10-17 (GAGGVGKS) contributes to the GTP binding site. The Effector region motif lies at 32–40 (YDPTIEDSY). GTP-binding positions include 57–61 (DTAGQ) and 116–119 (NKCD). C186 carries the post-translational modification Cysteine methyl ester. The S-geranylgeranyl cysteine moiety is linked to residue C186. Positions 187 to 189 (KML) are cleaved as a propeptide — removed in mature form.

The protein belongs to the small GTPase superfamily. Ras family.

The protein localises to the cell membrane. The enzyme catalyses GTP + H2O = GDP + phosphate + H(+). Alternates between an inactive form bound to GDP and an active form bound to GTP. Activated by a guanine nucleotide-exchange factor (GEF) and inactivated by a GTPase-activating protein (GAP). Functionally, ras proteins bind GDP/GTP and possess intrinsic GTPase activity. Plays a role in eye development by regulating cell growth, survival of postmitotic ommatidial cells and differentiation of photoreceptor cells. During larval development, mediates Ptth/tor signaling leading to the production of ecdysone, a hormone required for the initiation of metamorphosis. In Drosophila grimshawi (Hawaiian fruit fly), this protein is Ras-like protein 1.